Reading from the N-terminus, the 230-residue chain is 2,3-bisphosphoglycerate-dependent phosphoglycerate mutase (230 aa).

Substrate is bound by residues 8–15 (RHGQSEWN), 21–22 (TG), Arg60, 87–90 (ERHY), Lys98, 114–115 (RR), and 183–184 (GN). His9 (tele-phosphohistidine intermediate) is an active-site residue. The active-site Proton donor/acceptor is Glu87.

It belongs to the phosphoglycerate mutase family. BPG-dependent PGAM subfamily.

The catalysed reaction is (2R)-2-phosphoglycerate = (2R)-3-phosphoglycerate. The protein operates within carbohydrate degradation; glycolysis; pyruvate from D-glyceraldehyde 3-phosphate: step 3/5. Catalyzes the interconversion of 2-phosphoglycerate and 3-phosphoglycerate. This chain is 2,3-bisphosphoglycerate-dependent phosphoglycerate mutase, found in Lactobacillus acidophilus (strain ATCC 700396 / NCK56 / N2 / NCFM).